The primary structure comprises 94 residues: Small ribosomal subunit protein bS6 (94 aa).

Belongs to the bacterial ribosomal protein bS6 family.

In terms of biological role, binds together with bS18 to 16S ribosomal RNA. The polypeptide is Small ribosomal subunit protein bS6 (Clostridium botulinum (strain Kyoto / Type A2)).